The sequence spans 448 residues: N-succinylarginine dihydrolase (448 aa).

Residues 19-28 (AGLSYGNVAS), Asn-110, and 137-138 (HR) each bind substrate. The active site involves Glu-174. Arg-214 contacts substrate. His-250 is an active-site residue. Substrate is bound by residues Asp-252 and Asn-364. Cys-370 functions as the Nucleophile in the catalytic mechanism.

This sequence belongs to the succinylarginine dihydrolase family. In terms of assembly, homodimer.

It carries out the reaction N(2)-succinyl-L-arginine + 2 H2O + 2 H(+) = N(2)-succinyl-L-ornithine + 2 NH4(+) + CO2. It functions in the pathway amino-acid degradation; L-arginine degradation via AST pathway; L-glutamate and succinate from L-arginine: step 2/5. Its function is as follows. Catalyzes the hydrolysis of N(2)-succinylarginine into N(2)-succinylornithine, ammonia and CO(2). The chain is N-succinylarginine dihydrolase from Pseudoalteromonas translucida (strain TAC 125).